Reading from the N-terminus, the 304-residue chain is Chromo domain-containing protein cec-1 (304 aa).

The region spanning 8 to 66 (YTVESILEHRKKKGKSEFYIKWLGYDHTHNSWEPKENIVDPTLIEAFFTREAARKAEIK) is the Chromo domain. Residues 63 to 73 (AEIKAKKDKMA) are compositionally biased toward basic and acidic residues. Disordered regions lie at residues 63–235 (AEIK…EIQL) and 248–304 (VEPA…AIIE). The segment covering 75-102 (GKKGASSKASASVSKASASTPARGAKAA) has biased composition (low complexity). Residues 106–116 (PPKKSPPKRQR) show a composition bias toward basic residues. Residues 122 to 141 (IRPDSDTDEEHSSADKKSKA) show a composition bias toward basic and acidic residues. Acidic residues-rich tracts occupy residues 142–152 (EDEEEVEDDEE), 163–204 (EEPE…DVQL), and 212–233 (EEEE…EEEI). Positions 248–292 (VEPAVATPEPSEPSSSEKAVVENGSSSAAAGNSASKPEVSAVEVV) are enriched in low complexity. Residues 293 to 304 (TVEDDDDIAIIE) are compositionally biased toward acidic residues.

The protein resides in the nucleus. It localises to the chromosome. The protein is Chromo domain-containing protein cec-1 (cec-1) of Caenorhabditis elegans.